The sequence spans 706 residues: Envelope glycoprotein H (706 aa).

Positions 1-18 (MQLLCVFCLVLLWEVGAA) are cleaved as a signal peptide. At 19 to 682 (SLSEVKLHLD…LYEERAHVVL (664 aa)) the chain is on the virion surface side. Asn-60 is a glycosylation site (N-linked (GlcNAc...) asparagine; by host). Disulfide bonds link Cys-120–Cys-312 and Cys-278–Cys-335. Residues 165–229 (DKFQYTGAMT…QSGDYSLVIV (65 aa)) are interaction with gL. Asn-435 carries an N-linked (GlcNAc...) asparagine; by host glycan. 2 cysteine pairs are disulfide-bonded: Cys-454–Cys-478 and Cys-534–Cys-587. 2 N-linked (GlcNAc...) asparagine; by host glycosylation sites follow: Asn-549 and Asn-604. Cys-612 and Cys-615 are joined by a disulfide. Residue Asn-664 is glycosylated (N-linked (GlcNAc...) asparagine; by host). The chain crosses the membrane as a helical span at residues 683-703 (AIILYFIAFALGIFLVHKIVM). The Intravirion portion of the chain corresponds to 704–706 (FFL).

Belongs to the herpesviridae glycoprotein H family. In terms of assembly, interacts with glycoprotein L (gL); this interaction is necessary for the correct processing and cell surface expression of gH. The heterodimer gH/gL seems to interact with gB trimers during fusion. The heterodimer gH/gL interacts with host EPHA2 to facilitate virus internalization and fusion. Interacts with glycoprotein 42/BZLF2. In terms of processing, N-glycosylated, O-glycosylated, and sialylated.

The protein localises to the virion membrane. The protein resides in the host cell membrane. Its subcellular location is the host endosome membrane. Functionally, the heterodimer glycoprotein H-glycoprotein L is required for the fusion of viral and plasma membranes leading to virus entry into the host cell. Following initial binding to host receptor, membrane fusion is mediated by the fusion machinery composed of gB and the heterodimer gH/gL. May also be involved in the fusion between the virion envelope and the outer nuclear membrane during virion morphogenesis. The heterodimer gH/gL targets also host EPHA2 to promote viral entry. The chain is Envelope glycoprotein H from Homo sapiens (Human).